Here is a 246-residue protein sequence, read N- to C-terminus: Adenosylcobinamide-GDP ribazoletransferase (246 aa).

Helical transmembrane passes span 30 to 50 (VNWY…VHQA), 51 to 71 (GLVL…WVYV), 105 to 125 (VGAM…GAVA), 131 to 151 (GWGS…LLSI), 167 to 189 (ISSG…AGWY), 193 to 210 (LQVM…LWFS), and 226 to 246 (GAVI…SWWL).

It belongs to the CobS family. Requires Mg(2+) as cofactor.

It is found in the cell membrane. It carries out the reaction alpha-ribazole + adenosylcob(III)inamide-GDP = adenosylcob(III)alamin + GMP + H(+). The catalysed reaction is alpha-ribazole 5'-phosphate + adenosylcob(III)inamide-GDP = adenosylcob(III)alamin 5'-phosphate + GMP + H(+). It participates in cofactor biosynthesis; adenosylcobalamin biosynthesis; adenosylcobalamin from cob(II)yrinate a,c-diamide: step 7/7. Joins adenosylcobinamide-GDP and alpha-ribazole to generate adenosylcobalamin (Ado-cobalamin). Also synthesizes adenosylcobalamin 5'-phosphate from adenosylcobinamide-GDP and alpha-ribazole 5'-phosphate. This Brevibacillus brevis (strain 47 / JCM 6285 / NBRC 100599) protein is Adenosylcobinamide-GDP ribazoletransferase.